A 367-amino-acid polypeptide reads, in one-letter code: Germination protease (367 aa).

Residues 1–15 (MKEPLDLSKYSIRTD) constitute a propeptide that is removed on maturation.

Belongs to the peptidase A25 family. Homotetramer. Autoproteolytically processed. The inactive tetrameric zymogen termed p46 autoprocesses to a smaller form termed p41, which is active only during spore germination.

The enzyme catalyses Endopeptidase action with P4 Glu or Asp, P1 preferably Glu &gt; Asp, P1' hydrophobic and P2' Ala.. Its function is as follows. Initiates the rapid degradation of small, acid-soluble proteins during spore germination. The protein is Germination protease of Bacillus cereus (strain ATCC 14579 / DSM 31 / CCUG 7414 / JCM 2152 / NBRC 15305 / NCIMB 9373 / NCTC 2599 / NRRL B-3711).